Here is a 519-residue protein sequence, read N- to C-terminus: Glycerophosphoinositol permease 1 (519 aa).

The interval 1-32 (MSDLVKSSEVIETTEVPPHNNNNNKRHFKYDS) is disordered. Residues 39–59 (LAGGVKLKDALMILCAGFALI) form a helical membrane-spanning segment. Asparagine 93 carries an N-linked (GlcNAc...) asparagine glycan. Transmembrane regions (helical) follow at residues 94–114 (ASLVGTIFGQVIIGLTADYIG), 117–137 (WSIVTATCFLIFGTMMCAASH), and 141–161 (VNGMFWMLTIFRGVTGFGIGA). Asparagine 175 carries N-linked (GlcNAc...) asparagine glycosylation. Helical transmembrane passes span 186–206 (ILATNLPLSFGGPFALCIFLI), 216–236 (DAIWRTMFAIGCFWPLSVFYF), 273–293 (VAWFLYDFVTFPNGIFSAGII), 313–333 (LLLGAIALPGVFVGAYVVDIL), 337–357 (YTMMIGFCGYIVFGLIVGCGY), 363–383 (ITGLFIVFYGLMMSCGNFGPG), 404–424 (GISAAIGKVGAVVGTKTFSPI), and 432–452 (WTFIIAAICGLAGVLVTFIFI). The segment covering 487-500 (EEEDLEGSSEDSSD) has biased composition (acidic residues). A disordered region spans residues 487–519 (EEEDLEGSSEDSSDGEIVKNNTKNDVEKVDALK). Asparagine 506 carries an N-linked (GlcNAc...) asparagine glycan. The span at 508-519 (TKNDVEKVDALK) shows a compositional bias: basic and acidic residues.

Belongs to the major facilitator superfamily. Sugar transporter (TC 2.A.1.1) family.

The protein resides in the cell membrane. The enzyme catalyses sn-glycero-3-phospho-1D-myo-inositol(out) = sn-glycero-3-phospho-1D-myo-inositol(in). Glycerophosphodiester transporter that mediates uptake of glycerophosphoinositol (GroPIns) as a source of inositol and phosphate. Does not possess detectable glycerophosphocholine (GroPCho) transport activity. Although no glycerophosphoinositol transport activity occurs in the absence of GIT1, C.albicans is still able to use glycerophosphoinositol as a phosphate source at pH 7.5, albeit slowly. Thus, a second, GIT1-independent, mechanism must exist for utilizing glycerophosphoinositol as a phosphate source at physiological pH. The expanded ability to utilize GroPIns and GroPCho results from the organism's pathogenic nature and its need to occupy a variety of environments within its host organism. This possibility is buttressed by the fact that GroPIns and GroPCho are present and abundant in human fluids. In Candida albicans (strain SC5314 / ATCC MYA-2876) (Yeast), this protein is Glycerophosphoinositol permease 1.